The primary structure comprises 437 residues: Trigger factor (437 aa).

One can recognise a PPIase FKBP-type domain in the interval 161–246 (DDQVNIDFVG…VNSVSAPVLP (86 aa)).

It belongs to the FKBP-type PPIase family. Tig subfamily.

The protein resides in the cytoplasm. The enzyme catalyses [protein]-peptidylproline (omega=180) = [protein]-peptidylproline (omega=0). Functionally, involved in protein export. Acts as a chaperone by maintaining the newly synthesized protein in an open conformation. Functions as a peptidyl-prolyl cis-trans isomerase. This chain is Trigger factor, found in Pseudomonas putida (strain ATCC 47054 / DSM 6125 / CFBP 8728 / NCIMB 11950 / KT2440).